We begin with the raw amino-acid sequence, 481 residues long: uncharacterized protein (481 aa).

The next 11 membrane-spanning stretches (helical) occupy residues 14–34 (LGFCSVVMLGINSIIGAGIFL), 46–66 (FAPMAYVLAGIFAGVVAIVFA), 90–110 (IGIYVGVTHAITASIAWGVLA), 134–154 (FSVKTLTFLGFIGVLLAINLF), 167–187 (TVGKAFALSAFIVGGLWIITT), 218–238 (FSSMALATIVALYAFTGFESI), 258–278 (IAIFSVGAIYLLTLTVAMLLG), 303–323 (IIVVGALISMFGINVAASFGA), 377–397 (LAVIARFVQFIIVPIALIALA), 411–431 (AFTDKVLPLVAIVVSVGLAVS), and 446–466 (YFSIALIVITFIVVPAMAYLH).

This sequence belongs to the amino acid-polyamine-organocation (APC) superfamily.

The protein resides in the cell membrane. In terms of biological role, probable amino-acid or metabolite transport protein. This is an uncharacterized protein from Mycobacterium bovis (strain ATCC BAA-935 / AF2122/97).